We begin with the raw amino-acid sequence, 131 residues long: D-ribose pyranase (131 aa).

The active-site Proton donor is histidine 20. Substrate contacts are provided by residues aspartate 28, histidine 98, and 120–122 (YAN).

This sequence belongs to the RbsD / FucU family. RbsD subfamily. In terms of assembly, homodecamer.

Its subcellular location is the cytoplasm. The enzyme catalyses beta-D-ribopyranose = beta-D-ribofuranose. The protein operates within carbohydrate metabolism; D-ribose degradation; D-ribose 5-phosphate from beta-D-ribopyranose: step 1/2. Its function is as follows. Catalyzes the interconversion of beta-pyran and beta-furan forms of D-ribose. This Bacillus thuringiensis (strain Al Hakam) protein is D-ribose pyranase.